The following is a 498-amino-acid chain: L-proline--[L-prolyl-carrier protein] ligase (498 aa).

The protein belongs to the ATP-dependent AMP-binding enzyme family.

It catalyses the reaction holo-[peptidyl-carrier protein] + L-proline + ATP = L-prolyl-[peptidyl-carrier protein] + AMP + diphosphate. Involved in the biosynthesis of pyoluteorin. Catalyzes the conversion of L-proline to L-prolyl-AMP and the transfer of the L-prolyl group to acyl carrier protein PltL. The chain is L-proline--[L-prolyl-carrier protein] ligase from Pseudomonas fluorescens (strain ATCC BAA-477 / NRRL B-23932 / Pf-5).